Here is a 356-residue protein sequence, read N- to C-terminus: Protein RecA (356 aa).

78-85 is a binding site for ATP; it reads GPESSGKT.

Belongs to the RecA family.

The protein localises to the cytoplasm. Functionally, can catalyze the hydrolysis of ATP in the presence of single-stranded DNA, the ATP-dependent uptake of single-stranded DNA by duplex DNA, and the ATP-dependent hybridization of homologous single-stranded DNAs. It interacts with LexA causing its activation and leading to its autocatalytic cleavage. The chain is Protein RecA from Paracoccus denitrificans.